The sequence spans 494 residues: Sugar phosphate exchanger 3 (494 aa).

Residues 16 to 36 (FSHHHVVVFLLTFFSYSLLHA) traverse the membrane as a helical segment. N-linked (GlcNAc...) asparagine glycosylation is present at Asn-58. 5 helical membrane-spanning segments follow: residues 81–101 (TLFL…GLFI), 113–133 (WVLS…GALT), 147–167 (LWIV…AVMG), 177–197 (VVFG…ACLA), and 209–229 (FLVT…GLLV). An N-linked (GlcNAc...) asparagine glycan is attached at Asn-266. 6 helical membrane passes run 297-317 (LAYA…PFYL), 333-353 (IWYD…SDVL), 357-377 (APVL…YSRS), 386-406 (LLMT…SSAI), 428-448 (GIVD…VSLI), and 452-472 (LGWM…IVFI).

It belongs to the major facilitator superfamily. Organophosphate:Pi antiporter (OPA) (TC 2.A.1.4) family. As to quaternary structure, interacts with ATRAID; the interaction is direct and both proteins are mutually dependent for their stability. In terms of processing, glycosylated. Expressed in liver, kidney, intestine and pancreas.

The protein resides in the endoplasmic reticulum membrane. It localises to the lysosome membrane. In terms of biological role, unlike the other SLC37 members, lacks glucose-6-phosphate antiporter activity. In osteoclasts, forms a transporter complex with ATRAID for nitrogen-containing-bisphophonates (N-BPs) required for releasing N-BP molecules that have trafficked to lysosomes through fluid-phase endocytosis into the cytosol. This chain is Sugar phosphate exchanger 3, found in Homo sapiens (Human).